Here is a 268-residue protein sequence, read N- to C-terminus: Trypsin-like protease (268 aa).

The signal sequence occupies residues 1–41; that stretch reads MTHTTTIAAKRGGLALAKKAAAAGAVALAVASLQPVSAAHA. The propeptide at 42 to 45 is activation peptide; sequence ADAR. A Peptidase S1 domain is found at 46 to 266; sequence VIGGKPAAQN…FAKDIAKAAS (221 aa). Cys-67 and Cys-83 are disulfide-bonded. Active-site charge relay system residues include His-82 and Asp-127. Cystine bridges form between Cys-187-Cys-202 and Cys-213-Cys-242. Ser-217 acts as the Charge relay system in catalysis.

This sequence belongs to the peptidase S1 family.

Functionally, protease that shows preferential cleavage after Arg and Lys residues. The polypeptide is Trypsin-like protease (Streptomyces glaucescens).